A 403-amino-acid polypeptide reads, in one-letter code: Serine/threonine-protein phosphatase 4 regulatory subunit 2-A (403 aa).

Composition is skewed to polar residues over residues Glu140–Arg149, Pro156–Gly170, and Ser183–Ser196. Positions Glu140–Asp403 are disordered. A compositionally biased stretch (basic and acidic residues) spans Thr197–Gln211. Composition is skewed to polar residues over residues Ser212–Ser226 and Ala371–Glu387. Over residues Asn388–Asp403 the composition is skewed to acidic residues.

The protein belongs to the PPP4R2 family. Serine/threonine-protein phosphatase 4 (PP4) occurs in different assemblies of the catalytic and one or more regulatory subunits.

Its function is as follows. Regulatory subunit of serine/threonine-protein phosphatase 4 (PP4). This chain is Serine/threonine-protein phosphatase 4 regulatory subunit 2-A (ppp4r2-a), found in Xenopus laevis (African clawed frog).